Consider the following 714-residue polypeptide: Palmitoyltransferase ZDHHC5 (714 aa).

The Cytoplasmic segment spans residues 1–13; that stretch reads MPAESAKRFKPSK. The helical transmembrane segment at 14 to 34 threads the bilayer; the sequence is YVPVSAAAIFLVGATTLFFAF. Topologically, residues 35 to 52 are extracellular; it reads TCPGLSLSVSPAVPVYNA. The chain crosses the membrane as a helical span at residues 53–73; that stretch reads VVFLFVLANFSMATFMDPGVF. At 74–148 the chain is on the cytoplasmic side; that stretch reads PRAEEDEDKE…NCIGRRNYRY (75 aa). Tyr-91 is modified (phosphotyrosine). The DHHC domain maps to 104–154; the sequence is KWCATCRFYRPPRCSHCSVCDNCVEEFDHHCPWVNNCIGRRNYRYFFLFLL. The active-site S-palmitoyl cysteine intermediate is Cys-134. Residues 149-169 traverse the membrane as a helical segment; it reads FFLFLLSLTAHITGVFGFGLL. Residues 170 to 191 are Extracellular-facing; the sequence is YVLYHMEELSGVRTAVTMAVMC. A helical membrane pass occupies residues 192–212; that stretch reads VAGLFFIPVAGLTGFHVVLVA. Topologically, residues 213-714 are cytoplasmic; sequence RGRTTNEQVT…VGGTTYEISV (502 aa). Ser-247 bears the Phosphoserine mark. The interval 289–714 is disordered; it reads GELRRTKSKG…VGGTTYEISV (426 aa). Thr-294 bears the Phosphothreonine mark. Phosphoserine occurs at positions 296 and 299. Thr-303 carries the phosphothreonine modification. Ser-345 carries the phosphoserine modification. A phosphothreonine mark is found at Thr-348 and Thr-350. The segment covering 359-373 has biased composition (low complexity); it reads SSSSASAAMPHSSSA. A phosphoserine mark is found at Ser-380, Ser-398, Ser-406, and Ser-409. A compositionally biased stretch (polar residues) spans 388 to 398; sequence AESSRQPSYRS. Thr-411 bears the Phosphothreonine mark. Positions 422 to 432 are enriched in low complexity; sequence SSGSRSSSLKS. Residues Ser-425, Ser-429, and Ser-432 each carry the phosphoserine modification. Phosphothreonine is present on Thr-436. The segment covering 445 to 478 has biased composition (polar residues); that stretch reads SIRSEGTTSTSYKSLANQTRNGSLSYDSLLTPSD. Phosphoserine occurs at positions 529 and 554. The residue at position 616 (Arg-616) is an Omega-N-methylarginine. Phosphoserine is present on Ser-620. Thr-658 carries the post-translational modification Phosphothreonine. Polar residues predominate over residues 667 to 678; it reads TAYSKSNGQPKS. Residues 683–692 are compositionally biased toward pro residues; it reads PPGPGQPPLS. The residue at position 693 (Ser-693) is a Phosphoserine. Arg-696 carries the omega-N-methylarginine modification.

The protein belongs to the DHHC palmitoyltransferase family. ERF2/ZDHHC9 subfamily. Post-translationally, phosphorylation regulates association with endocytic proteins and its subcellular localization. Phosphorylation by LYN during fatty acid uptake leads to inactivation of the activity. In terms of processing, autopalmitoylated. Palmitoylation of the C-terminal tail regulates stimulation-dependent plasma membrane motility.

The protein resides in the cell membrane. It carries out the reaction L-cysteinyl-[protein] + hexadecanoyl-CoA = S-hexadecanoyl-L-cysteinyl-[protein] + CoA. Functionally, palmitoyltransferase that catalyzes the addition of palmitate onto various protein substrates such as CTNND2, CD36, GSDMD, NLRP3, NOD1, NOD2, STAT3 and S1PR1 thus plays a role in various biological processes including cell adhesion, inflammation, fatty acid uptake, bacterial sensing or cardiac functions. Plays an important role in the regulation of synapse efficacy by mediating palmitoylation of delta-catenin/CTNND2, thereby increasing synaptic delivery and surface stabilization of alpha-amino-3-hydroxy-5-methyl-4-isoxazole propionic acid receptors (AMPARs). Under basal conditions, remains at the synaptic membrane through FYN-mediated phosphorylation that prevents association with endocytic proteins. Neuronal activity enhances the internalization and trafficking of DHHC5 from spines to dendritic shafts where it palmitoylates delta-catenin/CTNND2. Regulates cell adhesion at the plasma membrane by palmitoylating GOLGA7B and DSG2. Plays a role in innate immune response by mediating the palmitoylation of NOD1 and NOD2 and their proper recruitment to the bacterial entry site and phagosomes. Also participates in fatty acid uptake by palmitoylating CD36 and thereby targeting it to the plasma membrane. Upon binding of fatty acids to CD36, gets phosphorylated by LYN leading to inactivation and subsequent CD36 caveolar endocytosis. Controls oligodendrocyte development by catalyzing STAT3 palmitoylation. Acts as a regulator of inflammatory response by mediating palmitoylation of NLRP3 and GSDMD. Palmitoylates NLRP3 to promote inflammasome assembly and activation. Activates pyroptosis by catalyzing palmitoylation of gasdermin-D (GSDMD), thereby promoting membrane translocation and pore formation of GSDMD. The sequence is that of Palmitoyltransferase ZDHHC5 (ZDHHC5) from Bos taurus (Bovine).